The chain runs to 216 residues: Uracil phosphoribosyltransferase (216 aa).

Residues arginine 85, arginine 110, and 135–143 (DPMVATGYS) contribute to the 5-phospho-alpha-D-ribose 1-diphosphate site. Uracil contacts are provided by residues isoleucine 200 and 205 to 207 (GDA). A 5-phospho-alpha-D-ribose 1-diphosphate-binding site is contributed by aspartate 206.

Belongs to the UPRTase family. Mg(2+) serves as cofactor.

It catalyses the reaction UMP + diphosphate = 5-phospho-alpha-D-ribose 1-diphosphate + uracil. It functions in the pathway pyrimidine metabolism; UMP biosynthesis via salvage pathway; UMP from uracil: step 1/1. Its activity is regulated as follows. Allosterically activated by GTP. In terms of biological role, catalyzes the conversion of uracil and 5-phospho-alpha-D-ribose 1-diphosphate (PRPP) to UMP and diphosphate. This Paraburkholderia phytofirmans (strain DSM 17436 / LMG 22146 / PsJN) (Burkholderia phytofirmans) protein is Uracil phosphoribosyltransferase.